The primary structure comprises 336 residues: 4-aminobenzoate N-oxygenase (336 aa).

Tyr93 provides a ligand contact to 4-nitrobenzoate. Positions 101, 136, 139, and 196 each coordinate Fe cation. Asn200 serves as a coordination point for 4-nitrobenzoate. Fe cation-binding residues include His223, Glu227, and His230.

This sequence belongs to the AurF N-oxygenase family. Homodimer. Fe(2+) serves as cofactor.

It carries out the reaction 4-aminobenzoate + AH2 + 2 O2 = 4-nitrobenzoate + A + 2 H2O. It functions in the pathway antibiotic biosynthesis. Its function is as follows. Involved in the biosynthesis of the polyketide antibiotic aureothin. Catalyzes the oxidation of p-aminobenzoate (pABA) to p-nitrobenzoate (pNBA), an unusual polyketide synthase starter unit. Reaction mechanism involves the generation of a peroxodiiron(III/III) intermediate, which effects the initial oxidation of p-aminobenzoate to p-hydroxylaminobenzoate (Ar-NHOH). Ar-NHOH is then probably directly converted to the fully oxidized p-nitrobenzoate via a four-electron N-oxidation, bypassing the formation of a nitroso compound. This chain is 4-aminobenzoate N-oxygenase, found in Streptomyces thioluteus.